A 209-amino-acid polypeptide reads, in one-letter code: UPF0502 protein PSHAa0076 (209 aa).

It belongs to the UPF0502 family.

The polypeptide is UPF0502 protein PSHAa0076 (Pseudoalteromonas translucida (strain TAC 125)).